A 417-amino-acid chain; its full sequence is Gamma-glutamyl phosphate reductase (417 aa).

This sequence belongs to the gamma-glutamyl phosphate reductase family.

The protein localises to the cytoplasm. It catalyses the reaction L-glutamate 5-semialdehyde + phosphate + NADP(+) = L-glutamyl 5-phosphate + NADPH + H(+). The protein operates within amino-acid biosynthesis; L-proline biosynthesis; L-glutamate 5-semialdehyde from L-glutamate: step 2/2. In terms of biological role, catalyzes the NADPH-dependent reduction of L-glutamate 5-phosphate into L-glutamate 5-semialdehyde and phosphate. The product spontaneously undergoes cyclization to form 1-pyrroline-5-carboxylate. In Desulfitobacterium hafniense (strain DSM 10664 / DCB-2), this protein is Gamma-glutamyl phosphate reductase.